The chain runs to 377 residues: Actin depolymerising venom protein gelsolin 1 (377 aa).

Residues 1–26 (MFRQMKLGSLATKLLLACFLVTCTSG) form the signal peptide. 3 Gelsolin-like repeats span residues 50-133 (FVPV…SEQF), 174-243 (IRVR…SSTS), and 298-368 (EKPL…PTAF).

Expressed by the venom gland (posterior main gland) (at protein level).

The protein localises to the secreted. The protein is Actin depolymerising venom protein gelsolin 1 of Platymeris rhadamanthus (Red spot assassin bug).